A 351-amino-acid polypeptide reads, in one-letter code: Glycerol-3-phosphate dehydrogenase [NAD(P)+] (351 aa).

Positions 18, 19, 38, and 122 each coordinate NADPH. Positions 122, 153, and 155 each coordinate sn-glycerol 3-phosphate. NADPH is bound at residue Ala157. Sn-glycerol 3-phosphate-binding residues include Lys208, Asp261, Ser271, Arg272, and Asn273. Catalysis depends on Lys208, which acts as the Proton acceptor. Arg272 provides a ligand contact to NADPH. Residue Glu297 coordinates NADPH.

Belongs to the NAD-dependent glycerol-3-phosphate dehydrogenase family.

The protein resides in the cytoplasm. It carries out the reaction sn-glycerol 3-phosphate + NAD(+) = dihydroxyacetone phosphate + NADH + H(+). The catalysed reaction is sn-glycerol 3-phosphate + NADP(+) = dihydroxyacetone phosphate + NADPH + H(+). It participates in membrane lipid metabolism; glycerophospholipid metabolism. Its function is as follows. Catalyzes the reduction of the glycolytic intermediate dihydroxyacetone phosphate (DHAP) to sn-glycerol 3-phosphate (G3P), the key precursor for phospholipid synthesis. The chain is Glycerol-3-phosphate dehydrogenase [NAD(P)+] from Bordetella bronchiseptica (strain ATCC BAA-588 / NCTC 13252 / RB50) (Alcaligenes bronchisepticus).